The following is a 505-amino-acid chain: Kinesin light chain 3 (505 aa).

A disordered region spans residues 1-20 (MSVQVAAPGSTGLGPERLNP). A coiled-coil region spans residues 90-150 (ALSAHVGVLE…EEEKSHLQFL (61 aa)). The disordered stretch occupies residues 154–197 (RQYDPPEESQRPDSPPRRDSLASLFPSEEEEKKGPEAAGAAAAQ). A compositionally biased stretch (basic and acidic residues) spans 161–173 (ESQRPDSPPRRDS). The residue at position 173 (serine 173) is a Phosphoserine. 5 TPR repeats span residues 207 to 240 (LRTL…LERS), 249 to 282 (ATML…REQT), 291 to 324 (AATL…REKV), 333 to 366 (AKQL…YEAL), and 375 to 408 (AKTK…EALP). Residues 409 to 439 (APLGAPQGGTAGEAQQQVLRRSSSFSKLRES) are disordered. The span at 421-434 (EAQQQVLRRSSSFS) shows a compositional bias: polar residues. Position 467 is a phosphoserine (serine 467). Residues 486–505 (QHLNEASRTLSASTQDLSPR) form a disordered region. Threonine 499 carries the phosphothreonine modification. At serine 503 the chain carries Phosphoserine.

This sequence belongs to the kinesin light chain family. Oligomer composed of two heavy chains and two light chains. Associates with microtubulin in an ATP-dependent manner. Interacts with KIF5C. Interacts with ODF1. Interacts with LRGUK. Interacts with VDAC2. As to expression, expressed in postmeiotic male germ cells (at protein level).

It is found in the cytoplasm. It localises to the cytoskeleton. Its subcellular location is the mitochondrion. Its function is as follows. Kinesin is a microtubule-associated force-producing protein that may play a role in organelle transport. Plays a role during spermiogenesis in the development of the sperm tail midpiece and in the normal function of spermatozoa. May play a role in the formation of the mitochondrial sheath formation in the developing spermatid midpiece. The chain is Kinesin light chain 3 (Klc3) from Rattus norvegicus (Rat).